The sequence spans 250 residues: Acetylglutamate kinase (250 aa).

Residues 41-42 (GG), Arg-63, and Asn-156 each bind substrate.

This sequence belongs to the acetylglutamate kinase family. ArgB subfamily.

The protein resides in the cytoplasm. The catalysed reaction is N-acetyl-L-glutamate + ATP = N-acetyl-L-glutamyl 5-phosphate + ADP. The protein operates within amino-acid biosynthesis; L-arginine biosynthesis; N(2)-acetyl-L-ornithine from L-glutamate: step 2/4. Its function is as follows. Catalyzes the ATP-dependent phosphorylation of N-acetyl-L-glutamate. This is Acetylglutamate kinase from Listeria monocytogenes serovar 1/2a (strain ATCC BAA-679 / EGD-e).